A 1229-amino-acid chain; its full sequence is DNA-directed RNA polymerase subunit beta (1229 aa).

The tract at residues 1175 to 1229 (ESIDEDEQPQGLGAFERGLEEVENGEEDDDKEKFYEDLMDASQEQDESADDDIDE) is disordered. Composition is skewed to acidic residues over residues 1195 to 1204 (EVENGEEDDD) and 1211 to 1229 (DLMDASQEQDESADDDIDE).

The protein belongs to the RNA polymerase beta chain family. In terms of assembly, the RNAP catalytic core consists of 2 alpha, 1 beta, 1 beta' and 1 omega subunit. When a sigma factor is associated with the core the holoenzyme is formed, which can initiate transcription.

It carries out the reaction RNA(n) + a ribonucleoside 5'-triphosphate = RNA(n+1) + diphosphate. In terms of biological role, DNA-dependent RNA polymerase catalyzes the transcription of DNA into RNA using the four ribonucleoside triphosphates as substrates. The chain is DNA-directed RNA polymerase subunit beta from Caldicellulosiruptor saccharolyticus (strain ATCC 43494 / DSM 8903 / Tp8T 6331).